Consider the following 840-residue polypeptide: Protein translocase subunit SecA (840 aa).

ATP is bound by residues Gln-87, 105-109 (GEGKT), and Asp-494. The segment at 518-537 (RRIDNQLRGRSGRQGDPGSS) is disordered. Residues Cys-826, Cys-828, Cys-837, and Cys-838 each coordinate Zn(2+).

The protein belongs to the SecA family. As to quaternary structure, monomer and homodimer. Part of the essential Sec protein translocation apparatus which comprises SecA, SecYEG and auxiliary proteins SecDF-YajC and YidC. It depends on Zn(2+) as a cofactor.

It is found in the cell inner membrane. The protein resides in the cytoplasm. The catalysed reaction is ATP + H2O + cellular proteinSide 1 = ADP + phosphate + cellular proteinSide 2.. Functionally, part of the Sec protein translocase complex. Interacts with the SecYEG preprotein conducting channel. Has a central role in coupling the hydrolysis of ATP to the transfer of proteins into and across the cell membrane, serving as an ATP-driven molecular motor driving the stepwise translocation of polypeptide chains across the membrane. The chain is Protein translocase subunit SecA from Desulforapulum autotrophicum (strain ATCC 43914 / DSM 3382 / VKM B-1955 / HRM2) (Desulfobacterium autotrophicum).